The sequence spans 362 residues: Ferrochelatase (362 aa).

Residues His212 and Glu294 each contribute to the Fe cation site.

The protein belongs to the ferrochelatase family.

It is found in the cytoplasm. The catalysed reaction is heme b + 2 H(+) = protoporphyrin IX + Fe(2+). Its pathway is porphyrin-containing compound metabolism; protoheme biosynthesis; protoheme from protoporphyrin-IX: step 1/1. Catalyzes the ferrous insertion into protoporphyrin IX. The chain is Ferrochelatase from Leptospira biflexa.